A 150-amino-acid chain; its full sequence is Large ribosomal subunit protein uL13 (150 aa).

The protein belongs to the universal ribosomal protein uL13 family. In terms of assembly, part of the 50S ribosomal subunit.

In terms of biological role, this protein is one of the early assembly proteins of the 50S ribosomal subunit, although it is not seen to bind rRNA by itself. It is important during the early stages of 50S assembly. This Mesoplasma florum (strain ATCC 33453 / NBRC 100688 / NCTC 11704 / L1) (Acholeplasma florum) protein is Large ribosomal subunit protein uL13.